A 196-amino-acid chain; its full sequence is Bcl-2-like protein 11 (196 aa).

Residues 1-68 (MAKQPSDVNS…PLAPPASPGP (68 aa)) are disordered. Polar residues predominate over residues 34 to 43 (TSLQTESQGN). S65 is modified (phosphoserine; by MAPK). A phosphoserine mark is found at S73, S83, and S90. The tract at residues 90 to 114 (SGYFSFDTDRSPAPMSCDKSTQTPS) is disordered. A BH3 motif is present at residues 146-160 (IAQELRRIGDEFNET).

It belongs to the Bcl-2 family. In terms of assembly, forms heterodimers with a number of antiapoptotic Bcl-2 proteins, including MCL1, BCL2, BCL2L1 isoform Bcl-X(L), BCL2A1/BFL-1, and BCL2L2/BCLW. Does not heterodimerize with proapoptotic proteins such as BAD, BOK or BAK. Identified in a complex containing BCL2L11, DYNLL1 and BCL2L1 isoform Bcl-X(L); BH3 integrity is required for BCL2L1-binding. Interacts with YWHAZ. When phosphorylated, interacts with TRIM2; this interaction is associated with ubiquitination and degradation. Interacts (via BH3) with MCL1; this interaction may sequester BCL2L11 and prevent its pro-apoptotic activity. When phosphorylated, isoform BimEL interacts with USP27X; this interaction leads to BCL2L11 deubiquitination and stabilization. Interacts with GIMAP5. Interacts with BCL2L10/BCL-B. Phosphorylation at Ser-65 by MAPK1/MAPK3 leads interaction with TRIM2 and ubiquitination, followed by proteasomal degradation. Deubiquitination catalyzed by USP27X stabilizes the protein. In terms of processing, ubiquitination by TRIM2 following phosphorylation by MAPK1/MAPK3 leads to proteasomal degradation. Conversely, deubiquitination catalyzed by USP27X stabilizes the protein. As to expression, widely expressed.

It localises to the membrane. The protein localises to the mitochondrion. Functionally, induces apoptosis and anoikis. The protein is Bcl-2-like protein 11 (Bcl2l11) of Rattus norvegicus (Rat).